A 150-amino-acid polypeptide reads, in one-letter code: FCS-Like Zinc finger 15 (150 aa).

A compositionally biased stretch (low complexity) spans 12 to 28; it reads NNNNNNNNNNNNNNNKN. The interval 12-31 is disordered; it reads NNNNNNNNNNNNNNNKNPLS. Residues 67–111 form an FLZ-type zinc finger; sequence GFLEHCFLCRRKLLPAKDIYMYKGDRAFCSVECRSKQMIMDEEES. The disordered stretch occupies residues 129 to 150; the sequence is SPATAPSRYRRDPRNQAGGFAY.

Belongs to the FLZ family. As to quaternary structure, interacts with KIN10 and KIN11 via its FLZ-type zinc finger domain. Interacts with KINB1 and KINB3 via its N-terminal part. Forms homodimer and heterodimer with FLZ1, FLZ2 and FLZ7 in vitro.

It localises to the cytoplasm. It is found in the P-body. Functionally, may act as an adapter to facilitate the interaction of SnRK1 complex with effector proteins, conferring tissue- and stimulus-type specific differences in the SnRK1 regulation pathway. This chain is FCS-Like Zinc finger 15, found in Arabidopsis thaliana (Mouse-ear cress).